Consider the following 256-residue polypeptide: Acetyl-coenzyme A carboxylase carboxyl transferase subunit alpha (256 aa).

The CoA carboxyltransferase C-terminal domain occupies 1 to 236 (MSDVARILKE…KTAIVDELAE (236 aa)).

This sequence belongs to the AccA family. In terms of assembly, acetyl-CoA carboxylase is a heterohexamer composed of biotin carboxyl carrier protein (AccB), biotin carboxylase (AccC) and two subunits each of ACCase subunit alpha (AccA) and ACCase subunit beta (AccD).

The protein localises to the cytoplasm. The enzyme catalyses N(6)-carboxybiotinyl-L-lysyl-[protein] + acetyl-CoA = N(6)-biotinyl-L-lysyl-[protein] + malonyl-CoA. The protein operates within lipid metabolism; malonyl-CoA biosynthesis; malonyl-CoA from acetyl-CoA: step 1/1. Component of the acetyl coenzyme A carboxylase (ACC) complex. First, biotin carboxylase catalyzes the carboxylation of biotin on its carrier protein (BCCP) and then the CO(2) group is transferred by the carboxyltransferase to acetyl-CoA to form malonyl-CoA. The chain is Acetyl-coenzyme A carboxylase carboxyl transferase subunit alpha from Streptococcus thermophilus (strain ATCC BAA-491 / LMD-9).